The sequence spans 418 residues: Lactate dehydrogenase (NAD(+),ferredoxin) subunit LctC (418 aa).

FAD contacts are provided by residues R285, 325 to 328, 343 to 348, N362, and 380 to 381; these read IGLS, SGAVQF, and DL.

This sequence belongs to the ETF alpha-subunit/FixB family. Part of the stable heterotrimeric lactate dehydrogenase-Etf complex, which is formed by the lactate dehydrogenase LctD and the electron-transferring flavoprotein (Etf) alpha (LctC) and beta (LctB) subunits. Requires FAD as cofactor. It depends on [4Fe-4S] cluster as a cofactor.

Its subcellular location is the cytoplasm. It catalyses the reaction lactate + 2 reduced [2Fe-2S]-[ferredoxin] + 2 NAD(+) = 2 oxidized [2Fe-2S]-[ferredoxin] + pyruvate + 2 NADH. With respect to regulation, activity is stimulated by divalent cations. Highest stimulation is observed with Ca(2+). In terms of biological role, the lactate dehydrogenase-Etf complex catalyzes the oxidation of lactate to pyruvate. It uses flavin-based electron confurcation to drive endergonic lactate oxidation with NAD(+) as oxidant at the expense of simultaneous exergonic electron flow from reduced ferredoxin to NAD(+). The electron transfer flavoprotein (Etf) mediates the electron transfer between the different donors and acceptors. This Acetobacterium woodii (strain ATCC 29683 / DSM 1030 / JCM 2381 / KCTC 1655 / WB1) protein is Lactate dehydrogenase (NAD(+),ferredoxin) subunit LctC.